The following is a 261-amino-acid chain: Single-strand annealing weakened protein 1 (261 aa).

In terms of assembly, interacts with MSH2, MSH3, RAD1, RAD10, RAD51 and RAD52.

The protein localises to the nucleus. Functionally, catalyzes 3'-non-homologous tail removal of RAD1/RAD10-dependent single-strand annealing recombination intermediates. Plays a key role in targeting RAD1/RAD10 complex to 3'-flap cleavage substrate in recombination. Also contributes to the integrity of ribosomal DNA arrays. The sequence is that of Single-strand annealing weakened protein 1 (SAW1) from Saccharomyces cerevisiae (strain ATCC 204508 / S288c) (Baker's yeast).